A 168-amino-acid polypeptide reads, in one-letter code: I-Kappa-B like protein G2 (168 aa).

2 ANK repeats span residues 56–88 and 93–123; these read SQRQ…DING and GGNT…NKTA.

It belongs to the polydnaviridae I-Kappa-B-like protein family.

Suppresses the host immune response through NF-kappa-B inactivation. Possesses ankyrin repeat domains required for NF-kappa-B binding but lacks the regulatory regions required for dissociation from NF-kappa-B and degradation. Therefore, prevents host NF-kappa-B release and subsequent activation. This chain is I-Kappa-B like protein G2 (G4), found in Microplitis demolitor (Parasitoid wasp).